Consider the following 491-residue polypeptide: MSLDKQIPIIYDFGENYEKNKDIWRRQCIYQILTDRFALDDHCTTAPSTGRMYLGGTWRGIIQKLDYIQSLGCTAVWISPIVKNIEGVTGYGEAYHGYWAEDLTQLNPHFGTKQDLTELVDQLHKRNMLCMIDIVVNHMAHAGDSPIDYSKYAPFNSPSHYHPKRFLHNYDDTWDCEIAWLGDEVVSLMDIRTEDQEVHNFFQNWIRDLIQTYHFDGLRIDTAKHVQKEFYPPFIAAANVFAFGEVYHGDPKFIAKYLEYIPSAANYPLYYQIENTFFPPKQSMNIFYQKAILEARATSMDTTILGNFTENHDVPRFLNRSTDYSLLCNTLTLLLFTDGIPIIFQGQEQMYAGGHDPENRDALWTSNYNQQNPIFQFLKKLIKLRQFLVDNVSGFTTELSNMLFVNEHVYVFRRPGVIIVVSNAGSNSDVDTSAEFSITERESLEFIDVLSGSQFSSLPTEDSSTISMNLEFSFPRVLVHRGLFHSMNELA.

Trp-99 is a substrate binding site. Residue Asn-137 participates in Ca(2+) binding. A substrate-binding site is contributed by His-138. 2 residues coordinate Ca(2+): Glu-177 and Asp-190. Arg-219 lines the substrate pocket. Ca(2+)-binding residues include Asp-221, His-225, and Glu-245. The Nucleophile role is filled by Asp-221. A substrate-binding site is contributed by 224 to 225 (KH). Glu-245 functions as the Proton donor in the catalytic mechanism. Residues Gly-249, His-312, and Arg-360 each contribute to the substrate site.

The protein belongs to the glycosyl hydrolase 13 family. Ca(2+) is required as a cofactor.

It is found in the cytoplasm. The protein resides in the nucleus. This is an uncharacterized protein from Schizosaccharomyces pombe (strain 972 / ATCC 24843) (Fission yeast).